Consider the following 103-residue polypeptide: Gene 56 protein (103 aa).

Residues 9-103 (WDGAHVRTLF…DYYTASETGL (95 aa)) enclose the Glutaredoxin domain.

The chain is Gene 56 protein (56) from Mycobacterium phage L5 (Mycobacteriophage L5).